A 107-amino-acid polypeptide reads, in one-letter code: Replication initiation control protein YabA (107 aa).

Zn(2+)-binding residues include His-81, Cys-83, Cys-97, and Cys-100.

This sequence belongs to the YabA family. Homotetramer. Interacts with both DnaA and DnaN, acting as a bridge between these two proteins. Requires Zn(2+) as cofactor.

The protein localises to the cytoplasm. Its subcellular location is the nucleoid. Functionally, involved in control of chromosome replication initiation. Inhibits the cooperative binding of DnaA to the oriC region, thus negatively regulating initiation of chromosome replication. Inhibits the ability of DnaA-ATP to form a helix on DNA; does not disassemble preformed DnaA-DNA helices. Decreases the residence time of DnaA on the chromosome at its binding sites (oriC, replication forks and promoter-binding sites). Tethers DnaA to the replication machinery via the DNA polymerase beta sliding clamp subunit (dnaN). Associates with oriC and other DnaA targets on the chromosome in a DnaA-dependent manner. In Streptococcus pyogenes serotype M3 (strain ATCC BAA-595 / MGAS315), this protein is Replication initiation control protein YabA.